The primary structure comprises 346 residues: Selenoprotein V (346 aa).

2 disordered regions span residues methionine 1–arginine 40 and leucine 151–threonine 206. A compositionally biased stretch (pro residues) spans leucine 151 to proline 162. A cross-link (cysteinyl-selenocysteine (Cys-Sec); redox-active) is located at residues cysteine 270–selenocysteine 273. Position 273 (selenocysteine 273) is a non-standard amino acid, selenocysteine.

This sequence belongs to the SelWTH family. Post-translationally, truncated SELENOV proteins produced by failed UGA/Sec decoding are ubiquitinated by the CRL2(APPBP2) complex, which recognizes the glycine (Gly) at the C-terminus of truncated SELENOV proteins. Testis specific.

In terms of biological role, may be involved in a redox-related process. The chain is Selenoprotein V from Homo sapiens (Human).